Reading from the N-terminus, the 291-residue chain is Nucleotide-binding protein lhv_0732 (291 aa).

An ATP-binding site is contributed by 13–20; it reads GMSGAGKT. Residue 61–64 coordinates GTP; that stretch reads DLRV.

Belongs to the RapZ-like family.

Displays ATPase and GTPase activities. The protein is Nucleotide-binding protein lhv_0732 of Lactobacillus helveticus (strain DPC 4571).